Reading from the N-terminus, the 161-residue chain is Nucleotide-binding protein Shew_2893 (161 aa).

Belongs to the YajQ family.

Its function is as follows. Nucleotide-binding protein. This Shewanella loihica (strain ATCC BAA-1088 / PV-4) protein is Nucleotide-binding protein Shew_2893.